A 333-amino-acid chain; its full sequence is Transcription termination factor MTERF6, chloroplastic/mitochondrial (333 aa).

Belongs to the mTERF family.

It localises to the plastid. The protein localises to the chloroplast. Its subcellular location is the mitochondrion. Functionally, transcription termination factor essential for chloroplast development. Required for maturation of 16S rRNA, 18S rRNA and 23S rRNA in the chloroplast. Binds to a specific region within the tRNA(Ile)(GAU) gene at a position adjacent to and downstream of the 16S rRNA gene. Required for the maturation of tRNA(Ile)(GAU). Binds to double-stranded DNA. The chain is Transcription termination factor MTERF6, chloroplastic/mitochondrial from Arabidopsis thaliana (Mouse-ear cress).